The primary structure comprises 756 residues: DNA mismatch repair protein Mlh1 (756 aa).

Serine 2 is subject to N-acetylserine. An N6-acetyllysine modification is found at lysine 33. Residues asparagine 38, aspartate 63, 82-84 (TSK), and 100-104 (RGEAL) each bind ATP. Lysine 241 and lysine 361 each carry N6-acetyllysine. 2 disordered regions span residues 355 to 378 (PSGE…SDKV) and 400 to 491 (LSKP…KEMT). A compositionally biased stretch (low complexity) spans 362-375 (STTSLTSSSTSGSS). An N6-acetyllysine modification is found at lysine 377. The tract at residues 410-650 (AIVTEDKTDI…LLIDNYVPPL (241 aa)) is interaction with EXO1. Over residues 443 to 457 (KNQSLEGDTTKGTSE) the composition is skewed to polar residues. The Nuclear localization signal motif lies at 471 to 474 (KRHR). Serine 477 bears the Phosphoserine mark.

This sequence belongs to the DNA mismatch repair MutL/HexB family. In terms of assembly, component of the DNA mismatch repair (MMR) complex composed at least of MSH2, MSH3, MSH6, PMS1 and MLH1. Heterodimer of MLH1 and PMS2 (MutL alpha), MLH1 and PMS1 (MutL beta) or MLH1 and MLH3 (MutL gamma). Forms a ternary complex with MutS alpha (MSH2-MSH6) or MutS beta (MSH2-MSH3). Part of the BRCA1-associated genome surveillance complex (BASC), which contains BRCA1, MSH2, MSH6, MLH1, ATM, BLM, PMS2 and the RAD50-MRE11-NBS1 protein complex. This association could be a dynamic process changing throughout the cell cycle and within subnuclear domains. Interacts with MCM9; the interaction recruits MLH1 to chromatin. Interacts with MCM8. Interacts with PMS2; this interaction promotes MLH1 stability. Interacts with MBD4. Interacts with EXO1. Interacts with MTMR15/FAN1. In terms of processing, acetylated. Deacetylated by HDAC6 which prevents the MutL alpha complex, formed by the MLH1-PMS2 heterodimer, from being recruited to the MutS alpha complex, formed by the MSH2-MSH6 heterodimer, leading to tolerance of DNA damage. Post-translationally, ubiquitinated by UBR4; leading to proteasomal degradation. This ubiquitination is counteracted by the deubiquitinase USP5. In terms of tissue distribution, colon, lymphocytes, breast, lung, spleen, testis, prostate, thyroid, gall bladder and heart.

It localises to the nucleus. The protein localises to the chromosome. Heterodimerizes with PMS2 to form MutL alpha, a component of the post-replicative DNA mismatch repair system (MMR). DNA repair is initiated by MutS alpha (MSH2-MSH6) or MutS beta (MSH2-MSH3) binding to a dsDNA mismatch, then MutL alpha is recruited to the heteroduplex. Assembly of the MutL-MutS-heteroduplex ternary complex in presence of RFC and PCNA is sufficient to activate endonuclease activity of PMS2. It introduces single-strand breaks near the mismatch and thus generates new entry points for the exonuclease EXO1 to degrade the strand containing the mismatch. DNA methylation would prevent cleavage and therefore assure that only the newly mutated DNA strand is going to be corrected. MutL alpha (MLH1-PMS2) interacts physically with the clamp loader subunits of DNA polymerase III, suggesting that it may play a role to recruit the DNA polymerase III to the site of the MMR. Also implicated in DNA damage signaling, a process which induces cell cycle arrest and can lead to apoptosis in case of major DNA damages. Heterodimerizes with MLH3 to form MutL gamma which plays a role in meiosis. The sequence is that of DNA mismatch repair protein Mlh1 (MLH1) from Homo sapiens (Human).